We begin with the raw amino-acid sequence, 635 residues long: Isethionate TRAP transporter permease protein DctMQ (635 aa).

16 helical membrane passes run 38-58 (KPFL…QTLY), 75-95 (TEEM…PVAI), 117-137 (ISWI…LWQS), 154-174 (LQLP…LMAV), 192-212 (TVIG…ADYI), 217-237 (VLFG…IGLG), 266-286 (FPIM…AGGL), 299-319 (GALP…FAAI), 350-370 (AIVA…PFVV), 379-399 (IGKL…ALMA), 431-451 (WALM…MTPT), 453-473 (AAAL…RELS), 481-501 (VVEA…ATIF), 526-546 (IAIL…MEAL), 572-592 (IIMV…VNLF), and 609-629 (VLPL…VPAI).

It in the N-terminal section; belongs to the TRAP transporter small permease family. The protein in the C-terminal section; belongs to the TRAP transporter large permease family. As to quaternary structure, the complex comprises the periplasmic solute receptor protein DctP, and the fused transmembrane protein DctMQ.

The protein resides in the cell inner membrane. The protein operates within organosulfur degradation; alkanesulfonate degradation. Its function is as follows. Part of the tripartite ATP-independent periplasmic (TRAP) transport system DctPQM involved in the uptake of isethionate (2-hydroxyethanesulfonate), which is then catabolized by enzymes encoded by adjacent genes in the locus. Thereby is involved in an anaerobic respiration pathway that converts the sulfonate isethionate to ammonia, acetate and sulfide. This Oleidesulfovibrio alaskensis (strain ATCC BAA-1058 / DSM 17464 / G20) (Desulfovibrio alaskensis) protein is Isethionate TRAP transporter permease protein DctMQ.